The chain runs to 596 residues: Glomulin (596 aa).

An N-acetylalanine modification is found at A2. An alpha-helical region with structural similarity to HEAT repeats region spans residues 2–555; the sequence is AVEELQSIIK…EEIPSMPPEM (554 aa). The important for interaction with RBX1 stretch occupies residues 299 to 596; the sequence is IDQLPMVLSP…STSEENVGIK (298 aa).

As to quaternary structure, interacts with FKBP4 and FKBP1A. Interacts with RBX1 (via RING domain). Identified in complexes that contain RBX1 plus one of the cullins CUL1, CUL2, CUL3, and CUL4A. Identified in a SCF complex composed of CUL1, RBX1, SKP1, FBXW7 and GLMN. Component of a SCF-like complex consisting of CUL7, RBX1, SKP1, FBXW8 and GLMN. Interacts with unphosphorylated MET and is released upon MET phosphorylation. Phosphorylated on tyrosine residues. As to expression, ubiquitous. Detected in embryonic vasculature and embryonic perichondrium, and in adult eye, brain, heart, testis, kidney, smooth muscle and skeletal muscle.

In terms of biological role, regulatory component of cullin-RING-based SCF (SKP1-Cullin-F-box protein) E3 ubiquitin-protein ligase complexes. Inhibits E3 ubiquitin ligase activity by binding to the RING domain of RBX1 and inhibiting its interaction with the E2 ubiquitin-conjugating enzyme CDC34. Inhibits RBX1-mediated neddylation of CUL1. Required for normal stability and normal cellular levels of key components of SCF ubiquitin ligase complexes, including FBXW7, RBX1, CUL1, CUL2, CUL3, CUL4A, and thereby contributes to the regulation of CCNE1 and MYC levels. Essential for normal development of the vasculature. Contributes to the regulation of RPS6KB1 phosphorylation. This chain is Glomulin (Glmn), found in Mus musculus (Mouse).